We begin with the raw amino-acid sequence, 102 residues long: Carboxysome shell protein CcmK3 (102 aa).

In terms of domain architecture, BMC spans 4 to 90; the sequence is AVGTIQTLGF…PQENVETVMP (87 aa).

It belongs to the bacterial microcompartments protein family. CcmK subfamily. As to quaternary structure, interacts stably with CcmK4, probably forms heterohexamers with a 1:2 CcmK3:CcmK4 stoichiometry. Bulky residues in the pore region probably preclude the formation of homohexamers by this subunit.

The protein resides in the carboxysome. In terms of biological role, a non-essential, minor shell protein of the carboxysome, a polyhedral inclusion where RuBisCO (ribulose bisphosphate carboxylase, rbcL-rbcS) is sequestered. Hexamers form sheets that form the facets of the polyhedral carboxysome. In PCC 7942 there are several CcmK paralogs with presumably functional differences. This subunit probably only makes heterohexamers with CcmK4. The CcmK3-CcmK4 heterohexmers have been suggested to cap other hexamers, perhaps to alter metabolite flux. The sequence is that of Carboxysome shell protein CcmK3 from Synechococcus elongatus (strain ATCC 33912 / PCC 7942 / FACHB-805) (Anacystis nidulans R2).